Reading from the N-terminus, the 334-residue chain is Ornithine carbamoyltransferase (334 aa).

Residues 57–60 (STRT), Gln-84, Arg-108, and 135–138 (HPTQ) each bind carbamoyl phosphate. L-ornithine-binding positions include Asn-169, Asp-233, and 237–238 (SM). Residues 275-276 (CL) and Arg-320 each bind carbamoyl phosphate.

This sequence belongs to the aspartate/ornithine carbamoyltransferase superfamily. OTCase family.

The protein localises to the cytoplasm. The enzyme catalyses carbamoyl phosphate + L-ornithine = L-citrulline + phosphate + H(+). Its pathway is amino-acid biosynthesis; L-arginine biosynthesis; L-arginine from L-ornithine and carbamoyl phosphate: step 1/3. Functionally, reversibly catalyzes the transfer of the carbamoyl group from carbamoyl phosphate (CP) to the N(epsilon) atom of ornithine (ORN) to produce L-citrulline. The polypeptide is Ornithine carbamoyltransferase (Vibrio parahaemolyticus serotype O3:K6 (strain RIMD 2210633)).